Here is a 381-residue protein sequence, read N- to C-terminus: Putative F-box/kelch-repeat protein At1g60570 (381 aa).

The region spanning 19–65 (PTLIPSLPEELILSILARVSRLSYRSLSLVCKRFHSLLTSGEIYRFR) is the F-box domain. Kelch repeat units lie at residues 126 to 169 (KIYK…LIDG), 171 to 218 (IYVT…ERTN), 220 to 266 (LLVD…VIEN), and 269 to 314 (YDFF…DYGG).

The sequence is that of Putative F-box/kelch-repeat protein At1g60570 from Arabidopsis thaliana (Mouse-ear cress).